The primary structure comprises 86 residues: Small ribosomal subunit protein bS16 (86 aa).

This sequence belongs to the bacterial ribosomal protein bS16 family.

In Stenotrophomonas maltophilia (strain R551-3), this protein is Small ribosomal subunit protein bS16.